Consider the following 300-residue polypeptide: Protein YIF1B-B (300 aa).

The disordered stretch occupies residues 1-46 (MNQESSFRAPPKRRVRGSNPNISNPHQLFDDTSGGPVPHGGDFPNH). Residues 1–142 (MNQESSFRAP…APRFDINAPD (142 aa)) are Cytoplasmic-facing. The helical transmembrane segment at 143 to 163 (LYIPVMAFITYILVAGLALGT) threads the bilayer. Over 164-178 (QSRFSPEILGMQASS) the chain is Extracellular. A helical transmembrane segment spans residues 179–199 (ALAWLIVEVLAILLSLYLVTV). The Cytoplasmic segment spans residues 200-205 (NTDLTT). The helical transmembrane segment at 206 to 226 (VDLVAFSGYKYVGMISGVIAG) threads the bilayer. Position 227 (Leu227) is a topological domain, extracellular. A helical transmembrane segment spans residues 228–248 (LFGNTGYYVVLAWCCISIVFF). The Cytoplasmic portion of the chain corresponds to 249–278 (MIRTLRLKILSEAAAEGVLVRGARNQLRMY). Residues 279 to 299 (LTMAIAAVQPIFMYWLTYHLV) form a helical membrane-spanning segment. Arg300 is a topological domain (extracellular).

The protein belongs to the YIF1 family.

It is found in the endoplasmic reticulum membrane. It localises to the golgi apparatus membrane. The protein resides in the endoplasmic reticulum-Golgi intermediate compartment membrane. Functions in endoplasmic reticulum to Golgi vesicle-mediated transport and regulates the proper organization of the endoplasmic reticulum and the Golgi. Plays a key role in targeting to neuronal dendrites receptors such as HTR1A. Plays also a role in primary cilium and sperm flagellum assembly probably through protein transport to these compartments. The sequence is that of Protein YIF1B-B (yif1b-b) from Xenopus laevis (African clawed frog).